Here is a 330-residue protein sequence, read N- to C-terminus: Ketol-acid reductoisomerase (NADP(+)) (330 aa).

One can recognise a KARI N-terminal Rossmann domain in the interval M1–T181. NADP(+)-binding positions include Y24–Q27, R47, S52, and D82–Q85. H107 is an active-site residue. NADP(+) is bound at residue G133. One can recognise a KARI C-terminal knotted domain in the interval T182–E327. Residues D190, E194, E226, and E230 each contribute to the Mg(2+) site. S251 is a substrate binding site.

This sequence belongs to the ketol-acid reductoisomerase family. The cofactor is Mg(2+).

The catalysed reaction is (2R)-2,3-dihydroxy-3-methylbutanoate + NADP(+) = (2S)-2-acetolactate + NADPH + H(+). The enzyme catalyses (2R,3R)-2,3-dihydroxy-3-methylpentanoate + NADP(+) = (S)-2-ethyl-2-hydroxy-3-oxobutanoate + NADPH + H(+). It functions in the pathway amino-acid biosynthesis; L-isoleucine biosynthesis; L-isoleucine from 2-oxobutanoate: step 2/4. The protein operates within amino-acid biosynthesis; L-valine biosynthesis; L-valine from pyruvate: step 2/4. Functionally, involved in the biosynthesis of branched-chain amino acids (BCAA). Catalyzes an alkyl-migration followed by a ketol-acid reduction of (S)-2-acetolactate (S2AL) to yield (R)-2,3-dihydroxy-isovalerate. In the isomerase reaction, S2AL is rearranged via a Mg-dependent methyl migration to produce 3-hydroxy-3-methyl-2-ketobutyrate (HMKB). In the reductase reaction, this 2-ketoacid undergoes a metal-dependent reduction by NADPH to yield (R)-2,3-dihydroxy-isovalerate. This chain is Ketol-acid reductoisomerase (NADP(+)), found in Methanococcus maripaludis (strain C7 / ATCC BAA-1331).